Consider the following 328-residue polypeptide: dTDP-glucose 4,6-dehydratase (328 aa).

Residues 13–14, 37–40, 63–64, 82–86, and Thr101 contribute to the NAD(+) site; these read FI, DALT, DI, and LAAES. Ser86 contributes to the substrate binding site. Residue Thr126 coordinates substrate. Asp127 serves as the catalytic Proton donor. Catalysis depends on proton acceptor residues Glu128 and Tyr150. An NAD(+)-binding site is contributed by 150–154; the sequence is YSASK. A substrate-binding site is contributed by Asn179. NAD(+) is bound at residue Asn180. Substrate is bound by residues 189 to 190, 205 to 207, Arg214, Asn249, and 272 to 276; these read KL, PLY, and DRKGH.

It belongs to the NAD(P)-dependent epimerase/dehydratase family. dTDP-glucose dehydratase subfamily. Homodimer. The cofactor is NAD(+).

The enzyme catalyses dTDP-alpha-D-glucose = dTDP-4-dehydro-6-deoxy-alpha-D-glucose + H2O. It functions in the pathway antibiotic biosynthesis; streptomycin biosynthesis. Functionally, involved in the biosynthesis of the streptose moiety of streptomycin. Catalyzes the dehydration of dTDP-D-glucose to form dTDP-6-deoxy-D-xylo-4-hexulose via a three-step process involving oxidation, dehydration and reduction. This Streptomyces griseus protein is dTDP-glucose 4,6-dehydratase.